We begin with the raw amino-acid sequence, 256 residues long: Necrosis-inducing protein NPP1 (256 aa).

The Conserved undecapeptide motif motif lies at Ala111 to Gly121. The Conserved heptapeptide motif motif lies at Gly133–Glu139.

Belongs to the Necrosis inducing protein (NPP1) family.

The protein localises to the secreted. Secreted effector that acts as a pathogen-associated molecular pattern (PAMP) recognized by the plant immune system. This is Necrosis-inducing protein NPP1 from Phytophthora cinnamomi (Cinnamon fungus).